A 705-amino-acid polypeptide reads, in one-letter code: Polyribonucleotide nucleotidyltransferase (705 aa).

2 residues coordinate Mg(2+): Asp486 and Asp492. Residues 553 to 612 form the KH domain; that stretch reads PRIYTMKINPEKIKDVIGKGGSVIRALTDETGTTIEIEDDGTIKIAATDGDKAKHAIRRI. Residues 622-690 form the S1 motif domain; sequence GRIYAGKVTR…RQGRIRLSIK (69 aa).

The protein belongs to the polyribonucleotide nucleotidyltransferase family. In terms of assembly, component of the RNA degradosome, which is a multiprotein complex involved in RNA processing and mRNA degradation. Mg(2+) is required as a cofactor.

The protein resides in the cytoplasm. The enzyme catalyses RNA(n+1) + phosphate = RNA(n) + a ribonucleoside 5'-diphosphate. In terms of biological role, involved in mRNA degradation. Catalyzes the phosphorolysis of single-stranded polyribonucleotides processively in the 3'- to 5'-direction. In Yersinia pestis bv. Antiqua (strain Nepal516), this protein is Polyribonucleotide nucleotidyltransferase.